A 225-amino-acid chain; its full sequence is NAD(P)H-quinone oxidoreductase subunit K, chloroplastic (225 aa).

Cys-43, Cys-44, Cys-108, and Cys-139 together coordinate [4Fe-4S] cluster.

It belongs to the complex I 20 kDa subunit family. NDH is composed of at least 16 different subunits, 5 of which are encoded in the nucleus. [4Fe-4S] cluster is required as a cofactor.

The protein resides in the plastid. The protein localises to the chloroplast thylakoid membrane. It carries out the reaction a plastoquinone + NADH + (n+1) H(+)(in) = a plastoquinol + NAD(+) + n H(+)(out). The catalysed reaction is a plastoquinone + NADPH + (n+1) H(+)(in) = a plastoquinol + NADP(+) + n H(+)(out). In terms of biological role, NDH shuttles electrons from NAD(P)H:plastoquinone, via FMN and iron-sulfur (Fe-S) centers, to quinones in the photosynthetic chain and possibly in a chloroplast respiratory chain. The immediate electron acceptor for the enzyme in this species is believed to be plastoquinone. Couples the redox reaction to proton translocation, and thus conserves the redox energy in a proton gradient. The protein is NAD(P)H-quinone oxidoreductase subunit K, chloroplastic of Solanum bulbocastanum (Wild potato).